A 711-amino-acid chain; its full sequence is Methionine--tRNA ligase (711 aa).

The short motif at 15-25 is the 'HIGH' region element; that stretch reads PYTNGPIHIGH. Zn(2+) is bound by residues C147, C150, C160, and C163. The short motif at 336-340 is the 'KMSKS' region element; sequence KLSTS. ATP is bound at residue T339. Residues 610–711 form the tRNA-binding domain; the sequence is DFAKMDIRIG…ADAPNGATVN (102 aa).

This sequence belongs to the class-I aminoacyl-tRNA synthetase family. MetG type 1 subfamily. As to quaternary structure, homodimer. Requires Zn(2+) as cofactor.

The protein localises to the cytoplasm. It catalyses the reaction tRNA(Met) + L-methionine + ATP = L-methionyl-tRNA(Met) + AMP + diphosphate. Is required not only for elongation of protein synthesis but also for the initiation of all mRNA translation through initiator tRNA(fMet) aminoacylation. In Flavobacterium johnsoniae (strain ATCC 17061 / DSM 2064 / JCM 8514 / BCRC 14874 / CCUG 350202 / NBRC 14942 / NCIMB 11054 / UW101) (Cytophaga johnsonae), this protein is Methionine--tRNA ligase.